The sequence spans 174 residues: UPF0336 protein MAP_3996c (174 aa).

A MaoC-like domain is found at 11-131 (IGSHYRAPDY…VLAEIRSEVT (121 aa)).

It belongs to the UPF0336 family.

The protein is UPF0336 protein MAP_3996c of Mycolicibacterium paratuberculosis (strain ATCC BAA-968 / K-10) (Mycobacterium paratuberculosis).